A 1017-amino-acid chain; its full sequence is Ubiquitin-like modifier-activating enzyme 1 (1017 aa).

Repeat copies occupy residues 26–163 (SHET…GQLF) and 419–571 (GKTL…QVVV). Residues 26-571 (SHETMKKITS…GTKGNTQVVV (546 aa)) form a 2 approximate repeats region. Residues Ala438, Asp464, Arg475, Lys488, and 536 to 537 (DN) each bind ATP. Residue Cys592 is the Glycyl thioester intermediate of the active site. The segment covering 765-781 (IQTSENEPAPSSNTQQA) has biased composition (polar residues). The disordered stretch occupies residues 765–788 (IQTSENEPAPSSNTQQAGGDAEDD).

The protein belongs to the ubiquitin-activating E1 family. Monomer.

It catalyses the reaction ATP + ubiquitin + [E1 ubiquitin-activating enzyme]-L-cysteine = AMP + diphosphate + S-ubiquitinyl-[E1 ubiquitin-activating enzyme]-L-cysteine.. It participates in protein modification; protein ubiquitination. Functionally, catalyzes the first step in ubiquitin conjugation to mark cellular proteins for degradation through the ubiquitin-proteasome system. Activates ubiquitin by first adenylating its C-terminal glycine residue with ATP, and thereafter linking this residue to the side chain of a cysteine residue in E1, yielding a ubiquitin-E1 thioester and free AMP. The polypeptide is Ubiquitin-like modifier-activating enzyme 1 (uba1) (Dictyostelium discoideum (Social amoeba)).